The sequence spans 209 residues: Small ribosomal subunit protein uS4 (209 aa).

A disordered region spans residues Arg-22–Ser-45. Positions Cys-93–Glu-154 constitute an S4 RNA-binding domain.

The protein belongs to the universal ribosomal protein uS4 family. As to quaternary structure, part of the 30S ribosomal subunit. Contacts protein S5. The interaction surface between S4 and S5 is involved in control of translational fidelity.

In terms of biological role, one of the primary rRNA binding proteins, it binds directly to 16S rRNA where it nucleates assembly of the body of the 30S subunit. Its function is as follows. With S5 and S12 plays an important role in translational accuracy. This is Small ribosomal subunit protein uS4 from Chlamydia trachomatis serovar A (strain ATCC VR-571B / DSM 19440 / HAR-13).